The following is a 447-amino-acid chain: MGKYFGTDGVRGIANSELTPELAFKIGRFGGYVLTKDKERPKVLIGRDTRISGHMLEGALVAGLLSIGAEVMRLGVISTPGVAYLTKALGAQAGVMISASHNPVQDNGIKFFGPDGFKLSDEQELEIEALLDSEQDTLPRPIGKDLGQVNDYFEGGQKYLQYLKQTVDEDFSGIHVALDCAHGATSALATHLFADLDADVSTMGASPNGLNINDGVGSTHPEALAAFVKEKGADVGLAFDGDGDRLIAVDENGQIVDGDQIMYICAKYLNEQGRLKHQTVVSTVMSNLGFYKALEAQGIKSVQTAVGDRYVVEEMKKNGYNLGGEQSGHIIFLDYNTTGDGLLTALQLVNIMKVTKKPLSELAGEMKKYPQKLVNVKVTDKQEAIANEEVQRVIREVEEEMAGNGRILVRPSGTEPLVRVMAEAPTNELCDQYVERIAAVIRERFGA.

Ser-100 acts as the Phosphoserine intermediate in catalysis. Positions 100, 240, 242, and 244 each coordinate Mg(2+). Residue Ser-100 is modified to Phosphoserine.

The protein belongs to the phosphohexose mutase family. Mg(2+) serves as cofactor. Post-translationally, activated by phosphorylation.

The catalysed reaction is alpha-D-glucosamine 1-phosphate = D-glucosamine 6-phosphate. Its function is as follows. Catalyzes the conversion of glucosamine-6-phosphate to glucosamine-1-phosphate. This is Phosphoglucosamine mutase from Anoxybacillus flavithermus (strain DSM 21510 / WK1).